Here is a 175-residue protein sequence, read N- to C-terminus: Ribosome maturation factor RimM (175 aa).

The PRC barrel domain occupies 100–173 (EGEYYFHEII…IIIIRPMEGL (74 aa)).

Belongs to the RimM family. In terms of assembly, binds ribosomal protein uS19.

The protein localises to the cytoplasm. Functionally, an accessory protein needed during the final step in the assembly of 30S ribosomal subunit, possibly for assembly of the head region. Essential for efficient processing of 16S rRNA. May be needed both before and after RbfA during the maturation of 16S rRNA. It has affinity for free ribosomal 30S subunits but not for 70S ribosomes. This is Ribosome maturation factor RimM from Geobacillus thermodenitrificans (strain NG80-2).